Here is a 370-residue protein sequence, read N- to C-terminus: MRVIFSGGGTGGHIYPIMALIERLKEEGICQDDEILFVGTKKGLESKIVPAAGVNFKTIDIQGFDRKHLLNNVKTIQLFLKATKRAKEILADFQPDVVLGTGGYVSGAIVYEASKMKIPTMIHESNSVVGVANKFLGHYVDKICYTFDDAAKEFPEKKKLVKTGNPRSQQVLSLNAKPVDLAGDLGLNPKIPTVLVFGGSRGALAINRVMLKSLMELKKKPYQVIWATGTYYYDAIEKKLADVDYDDSIKVVPYIDNMPGLLPEMTCVVSRSGATSLAEFTALGVPVILIPSPNVTHNHQMKNAMDLEKAGAALVIAEDDLNENTFVSSIDHLLLDQSYDEKMRQASKALGVPDASDQVIKVMKEIAKKN.

UDP-N-acetyl-alpha-D-glucosamine is bound by residues 10–12 (TGG), asparagine 126, serine 200, isoleucine 255, and glutamine 300.

Belongs to the glycosyltransferase 28 family. MurG subfamily.

Its subcellular location is the cell membrane. It catalyses the reaction Mur2Ac(oyl-L-Ala-gamma-D-Glu-L-Lys-D-Ala-D-Ala)-di-trans,octa-cis-undecaprenyl diphosphate + UDP-N-acetyl-alpha-D-glucosamine = beta-D-GlcNAc-(1-&gt;4)-Mur2Ac(oyl-L-Ala-gamma-D-Glu-L-Lys-D-Ala-D-Ala)-di-trans,octa-cis-undecaprenyl diphosphate + UDP + H(+). It participates in cell wall biogenesis; peptidoglycan biosynthesis. Functionally, cell wall formation. Catalyzes the transfer of a GlcNAc subunit on undecaprenyl-pyrophosphoryl-MurNAc-pentapeptide (lipid intermediate I) to form undecaprenyl-pyrophosphoryl-MurNAc-(pentapeptide)GlcNAc (lipid intermediate II). The polypeptide is UDP-N-acetylglucosamine--N-acetylmuramyl-(pentapeptide) pyrophosphoryl-undecaprenol N-acetylglucosamine transferase (Lactobacillus delbrueckii subsp. bulgaricus (strain ATCC 11842 / DSM 20081 / BCRC 10696 / JCM 1002 / NBRC 13953 / NCIMB 11778 / NCTC 12712 / WDCM 00102 / Lb 14)).